Here is a 224-residue protein sequence, read N- to C-terminus: Protein LURP-one-related 1 (224 aa).

The disordered stretch occupies residues 1–23 (MQQPYEYRYPQGTGPSAPPPPPK).

Belongs to the LOR family.

Its function is as follows. Might be related to the phospholipid scramblase and tubby-like superfamily of membrane tethered transcription factors. This chain is Protein LURP-one-related 1, found in Arabidopsis thaliana (Mouse-ear cress).